A 419-amino-acid polypeptide reads, in one-letter code: UDP-N-acetylglucosamine 1-carboxyvinyltransferase (419 aa).

Residue 22-23 (KN) participates in phosphoenolpyruvate binding. Arg-91 serves as a coordination point for UDP-N-acetyl-alpha-D-glucosamine. Residue Cys-115 is the Proton donor of the active site. 2-(S-cysteinyl)pyruvic acid O-phosphothioketal is present on Cys-115. Residues 120–124 (RPVDL), 160–163 (KVSV), Asp-305, and Ile-327 each bind UDP-N-acetyl-alpha-D-glucosamine.

Belongs to the EPSP synthase family. MurA subfamily.

It localises to the cytoplasm. It carries out the reaction phosphoenolpyruvate + UDP-N-acetyl-alpha-D-glucosamine = UDP-N-acetyl-3-O-(1-carboxyvinyl)-alpha-D-glucosamine + phosphate. It functions in the pathway cell wall biogenesis; peptidoglycan biosynthesis. Its activity is regulated as follows. In vitro inhibited by covalent binding of fosfomycin and the fungal product terreic acid in the presence of substrate UDP-N-acetylglucosamine, with an inactivation rate constant of 130 M(-1)sec(-1) for terreic acid. In terms of biological role, cell wall formation. Adds enolpyruvyl to UDP-N-acetylglucosamine. Target for the antibiotic fosfomycin. The protein is UDP-N-acetylglucosamine 1-carboxyvinyltransferase of Enterobacter cloacae subsp. cloacae (strain ATCC 13047 / DSM 30054 / NBRC 13535 / NCTC 10005 / WDCM 00083 / NCDC 279-56).